We begin with the raw amino-acid sequence, 345 residues long: GTPase Obg (345 aa).

Positions 1 to 159 (MKFLDQAKVY…KWIWLRLKLI (159 aa)) constitute an Obg domain. Residues 160–327 (ADAGLVGLPN…ALRALLAVID (168 aa)) enclose the OBG-type G domain. Residues 166 to 173 (GLPNAGKS), 191 to 195 (FTTLH), 212 to 215 (DIPG), 279 to 282 (SKID), and 308 to 310 (SSQ) contribute to the GTP site. Mg(2+) contacts are provided by Ser-173 and Thr-193.

The protein belongs to the TRAFAC class OBG-HflX-like GTPase superfamily. OBG GTPase family. In terms of assembly, monomer. Requires Mg(2+) as cofactor.

It is found in the cytoplasm. In terms of biological role, an essential GTPase which binds GTP, GDP and possibly (p)ppGpp with moderate affinity, with high nucleotide exchange rates and a fairly low GTP hydrolysis rate. Plays a role in control of the cell cycle, stress response, ribosome biogenesis and in those bacteria that undergo differentiation, in morphogenesis control. The protein is GTPase Obg of Azorhizobium caulinodans (strain ATCC 43989 / DSM 5975 / JCM 20966 / LMG 6465 / NBRC 14845 / NCIMB 13405 / ORS 571).